The sequence spans 438 residues: Ornithine aminotransferase car2 (438 aa).

N6-(pyridoxal phosphate)lysine is present on lysine 275.

It belongs to the class-III pyridoxal-phosphate-dependent aminotransferase family. Pyridoxal 5'-phosphate serves as cofactor.

The protein localises to the cytoplasm. Its subcellular location is the nucleus. It catalyses the reaction a 2-oxocarboxylate + L-ornithine = L-glutamate 5-semialdehyde + an L-alpha-amino acid. It functions in the pathway amino-acid biosynthesis; L-proline biosynthesis; L-glutamate 5-semialdehyde from L-ornithine: step 1/1. This chain is Ornithine aminotransferase car2 (car2), found in Schizosaccharomyces pombe (strain 972 / ATCC 24843) (Fission yeast).